The chain runs to 1240 residues: ABC transporter B family member 15 (1240 aa).

6 helical membrane-spanning segments follow: residues 35-55 (MGLGLIGAVGDGFTTPLVLLI), 82-102 (VALLYVACGSWVVCFLEGYCW), 158-180 (LPNFLMSASTFVGSYIVGFILLW), 184-206 (IVGLPFIVLLVIPGLMYGRALIS), 264-284 (GITIGSNGITFAMWGFMSWYG), and 296-316 (GTVFAVAAAIAIGGVSLGGGL). The ABC transmembrane type-1 1 domain maps to 35–324 (MGLGLIGAVG…GLSNLKYFFE (290 aa)). An ABC transporter 1 domain is found at 359 to 595 (VEFKNVKFVY…IDGQYSTLVH (237 aa)). 394–401 (GGSGSGKS) is an ATP binding site. Residues Asn-542, Asn-605, and Asn-622 are each glycosylated (N-linked (GlcNAc...) asparagine). Residues 617–646 (SKDIRNSSRVSTLSRSSSANSVTGPSTIKN) are disordered. Positions 623 to 639 (SSRVSTLSRSSSANSVT) are enriched in low complexity. N-linked (GlcNAc...) asparagine glycosylation is present at Asn-646. An ABC transmembrane type-1 2 domain is found at 672-960 (ALYGCISATL…AGSMTTDLAK (289 aa)). Transmembrane regions (helical) follow at residues 681-701 (LFGAIQPAYAYSLGSMVSVYF) and 714-734 (IYALSFVGLAVLSFLINISQH). The N-linked (GlcNAc...) asparagine glycan is linked to Asn-769. 4 consecutive transmembrane segments (helical) span residues 794–813 (ALVVQTVSAVTIAFTMGLVI), 817–839 (LALVMIAVQPVIIVCFYTRRVLL), 895–915 (SWFAGFGLAMSQSLTSCTWAL), and 923–943 (LIQDGYITAKALFETFMILVS). The region spanning 995-1233 (VEFLDVDFSY…GPTGIYFSLV (239 aa)) is the ABC transporter 2 domain. Asn-1015 carries an N-linked (GlcNAc...) asparagine glycan. An ATP-binding site is contributed by 1030–1037 (GPSGSGKS).

This sequence belongs to the ABC transporter superfamily. ABCB family. Multidrug resistance exporter (TC 3.A.1.201) subfamily.

It is found in the membrane. This is ABC transporter B family member 15 (ABCB15) from Arabidopsis thaliana (Mouse-ear cress).